The sequence spans 275 residues: Adenosylcobinamide-GDP ribazoletransferase (275 aa).

6 helical membrane-spanning segments follow: residues 53 to 73, 113 to 133, 144 to 164, 204 to 224, 225 to 245, and 253 to 273; these read WFVFLLFQFLFGPTIAFTISL, VGSFGAAGISLLLLLKVLGVS, LPFTFGSSAQIHLLSVWLYFV, FACIFGVTPFLALVYLHPYFL, LSLLCIIPSFVYMFSLMKRWI, and LGAVQQVVETCIWISGVFVWI.

The protein belongs to the CobS family. It depends on Mg(2+) as a cofactor.

The protein resides in the cell inner membrane. The enzyme catalyses alpha-ribazole + adenosylcob(III)inamide-GDP = adenosylcob(III)alamin + GMP + H(+). It catalyses the reaction alpha-ribazole 5'-phosphate + adenosylcob(III)inamide-GDP = adenosylcob(III)alamin 5'-phosphate + GMP + H(+). Its pathway is cofactor biosynthesis; adenosylcobalamin biosynthesis; adenosylcobalamin from cob(II)yrinate a,c-diamide: step 7/7. In terms of biological role, joins adenosylcobinamide-GDP and alpha-ribazole to generate adenosylcobalamin (Ado-cobalamin). Also synthesizes adenosylcobalamin 5'-phosphate from adenosylcobinamide-GDP and alpha-ribazole 5'-phosphate. The polypeptide is Adenosylcobinamide-GDP ribazoletransferase (Leptospira biflexa serovar Patoc (strain Patoc 1 / Ames)).